The sequence spans 549 residues: Probable acyl-activating enzyme 10 (549 aa).

This sequence belongs to the ATP-dependent AMP-binding enzyme family. As to expression, expressed at low levels in roots.

In terms of biological role, may act as an acid--thiol ligase that activates carboxylic acids by forming acyl-CoAs. This chain is Probable acyl-activating enzyme 10 (AEE10), found in Arabidopsis thaliana (Mouse-ear cress).